A 533-amino-acid chain; its full sequence is Probable DNA ligase (533 aa).

Glu211 is an ATP binding site. Lys213 functions as the N6-AMP-lysine intermediate in the catalytic mechanism. Residues Arg218, Arg233, Glu262, Phe302, Arg374, and Lys380 each coordinate ATP. Residues 512-533 are disordered; it reads LAGEAAEKGQAEGGGEELEDDG.

The protein belongs to the ATP-dependent DNA ligase family. Mg(2+) is required as a cofactor.

It catalyses the reaction ATP + (deoxyribonucleotide)n-3'-hydroxyl + 5'-phospho-(deoxyribonucleotide)m = (deoxyribonucleotide)n+m + AMP + diphosphate.. In terms of biological role, DNA ligase that seals nicks in double-stranded DNA during DNA replication, DNA recombination and DNA repair. The chain is Probable DNA ligase from Sorangium cellulosum (strain So ce56) (Polyangium cellulosum (strain So ce56)).